The following is a 336-amino-acid chain: Ethanol acetyltransferase 1 (336 aa).

The transit peptide at 1-14 (MFPTRVLRSTLQKL) directs the protein to the mitochondrion. In terms of domain architecture, AB hydrolase-1 spans 44–296 (PIVFLHGIFG…VNSSHDILDQ (253 aa)). Catalysis depends on charge relay system residues serine 117, aspartate 141, and histidine 291.

This sequence belongs to the AB hydrolase superfamily.

It is found in the mitochondrion. The enzyme catalyses ethanol + acetyl-CoA = ethyl acetate + CoA. The catalysed reaction is acetyl-CoA + H2O = acetate + CoA + H(+). It catalyses the reaction ethyl acetate + H2O = ethanol + acetate + H(+). In terms of biological role, alcohol acetyltransferase that catalyzes the synthesis of ethyl acetate from ethanol and acetyl-CoA. Can also function as a thioesterase by hydrolyzing acetyl-CoA in the absence of ethanol, as well as esterase hydrolyzing ethyl acetate. The sequence is that of Ethanol acetyltransferase 1 (EAT1) from Cyberlindnera jadinii (strain ATCC 18201 / CBS 1600 / BCRC 20928 / JCM 3617 / NBRC 0987 / NRRL Y-1542) (Torula yeast).